A 159-amino-acid chain; its full sequence is Ribosomal RNA large subunit methyltransferase H (159 aa).

Residues Leu-76, Gly-108, and 127-132 each bind S-adenosyl-L-methionine; that span reads FSNMTF.

It belongs to the RNA methyltransferase RlmH family. Homodimer.

The protein resides in the cytoplasm. The catalysed reaction is pseudouridine(1915) in 23S rRNA + S-adenosyl-L-methionine = N(3)-methylpseudouridine(1915) in 23S rRNA + S-adenosyl-L-homocysteine + H(+). Functionally, specifically methylates the pseudouridine at position 1915 (m3Psi1915) in 23S rRNA. This chain is Ribosomal RNA large subunit methyltransferase H, found in Staphylococcus epidermidis (strain ATCC 35984 / DSM 28319 / BCRC 17069 / CCUG 31568 / BM 3577 / RP62A).